The chain runs to 147 residues: uncharacterized protein (147 aa).

The disordered stretch occupies residues 110 to 133; sequence VLEPPTPSQPAPTPEPAVKPQPIA. Residues 113–128 show a composition bias toward pro residues; that stretch reads PPTPSQPAPTPEPAVK.

This is an uncharacterized protein from Ictalurid herpesvirus 1 (strain Auburn) (IcHV-1).